Reading from the N-terminus, the 185-residue chain is Threonylcarbamoyl-AMP synthase (185 aa).

The 182-residue stretch at 4–185 folds into the YrdC-like domain; the sequence is SFRAQCAARV…LVTGQVIRPA (182 aa).

Belongs to the SUA5 family. TsaC subfamily.

It localises to the cytoplasm. The enzyme catalyses L-threonine + hydrogencarbonate + ATP = L-threonylcarbamoyladenylate + diphosphate + H2O. Required for the formation of a threonylcarbamoyl group on adenosine at position 37 (t(6)A37) in tRNAs that read codons beginning with adenine. Catalyzes the conversion of L-threonine, HCO(3)(-)/CO(2) and ATP to give threonylcarbamoyl-AMP (TC-AMP) as the acyladenylate intermediate, with the release of diphosphate. In Pseudomonas aeruginosa (strain UCBPP-PA14), this protein is Threonylcarbamoyl-AMP synthase.